The sequence spans 210 residues: Orotate phosphoribosyltransferase (210 aa).

5-phospho-alpha-D-ribose 1-diphosphate-binding positions include arginine 96, lysine 100, histidine 102, and 122-130; that span reads EDLISTGGS. Serine 126 lines the orotate pocket.

It belongs to the purine/pyrimidine phosphoribosyltransferase family. PyrE subfamily. In terms of assembly, homodimer. The cofactor is Mg(2+).

The enzyme catalyses orotidine 5'-phosphate + diphosphate = orotate + 5-phospho-alpha-D-ribose 1-diphosphate. Its pathway is pyrimidine metabolism; UMP biosynthesis via de novo pathway; UMP from orotate: step 1/2. Functionally, catalyzes the transfer of a ribosyl phosphate group from 5-phosphoribose 1-diphosphate to orotate, leading to the formation of orotidine monophosphate (OMP). The protein is Orotate phosphoribosyltransferase (pyrE) of Streptococcus pneumoniae serotype 19F (strain G54).